Reading from the N-terminus, the 360-residue chain is MDFICAAPGFKSISAINLFMGLWSGRRKELKLISSSRLSELFDTPKKYAGFYTMLKSYRTDLKSDYRNFLVRVAGKYNDVLSIAIRMEYRMYQIALLRMIRVFEHILANWRTLSSNDVPTAECDEYFAKELLIPGKEIYHSDVGIEVVADIPHLIFMYSSVKGQLKRMIPTTDRPVCDHLMFRETEEELDPLAEEVVVENMPVILDDKELNRIVEYIAHLASYPVIPPDLAGNVLTTHGFDEYEALELKDMSKDNRSRVVGLADDRVCVACKVDSLAIGHTDIIEQDRRMVCNCAVKINRDVYSDEGDDLITTLATTKASMKVRNLVMNGKGGCQCKSHGSVMNAAVNRFTEVLRSLHVF.

This is an uncharacterized protein from Ostreid herpesvirus 1 (isolate France) (OsHV-1).